Reading from the N-terminus, the 121-residue chain is Conopressin-conophysin (121 aa).

Positions 1-20 are cleaved as a signal peptide; that stretch reads MGRLTMALCWLLLLLLTTQA. Cysteine 21 and cysteine 26 are joined by a disulfide. Proline 27 carries the post-translational modification 4-hydroxyproline; partial; in Conopressin-ba1c. Residue glycine 29 is modified to Glycine amide. Intrachain disulfides connect cysteine 43–cysteine 83, cysteine 46–cysteine 57, cysteine 51–cysteine 73, cysteine 58–cysteine 63, cysteine 90–cysteine 108, cysteine 102–cysteine 120, and cysteine 109–cysteine 114.

This sequence belongs to the vasopressin/oxytocin family. In terms of tissue distribution, expressed by the venom duct.

It is found in the secreted. The sequence is that of Conopressin-conophysin from Conus bayani (Bayan's cone).